A 227-amino-acid chain; its full sequence is Ribose-5-phosphate isomerase A (227 aa).

Substrate-binding positions include 26–29 (TGST), 82–85 (DGAD), and 95–98 (KGGG). Glutamate 104 (proton acceptor) is an active-site residue. Residue lysine 122 participates in substrate binding.

This sequence belongs to the ribose 5-phosphate isomerase family. As to quaternary structure, homodimer.

It catalyses the reaction aldehydo-D-ribose 5-phosphate = D-ribulose 5-phosphate. It participates in carbohydrate degradation; pentose phosphate pathway; D-ribose 5-phosphate from D-ribulose 5-phosphate (non-oxidative stage): step 1/1. Catalyzes the reversible conversion of ribose-5-phosphate to ribulose 5-phosphate. This Streptococcus pyogenes serotype M2 (strain MGAS10270) protein is Ribose-5-phosphate isomerase A.